A 506-amino-acid chain; its full sequence is Serine/threonine-protein kinase RIO1 (506 aa).

The interval 22–52 (TASSSSDDEPEQAVVKQEKLEAGEQIEEQYD) is disordered. The 365-residue stretch at 142–506 (LNIDGCISTG…KKRAHRQHMK (365 aa)) folds into the Protein kinase domain. Residues 148–156 (ISTGKEANV), Lys-169, and Leu-241 contribute to the ATP site. Asp-285 functions as the Proton acceptor in the catalytic mechanism. Residue Asn-290 coordinates ATP. 2 residues coordinate Mg(2+): Asn-290 and Asp-302. Asp-302 (4-aspartylphosphate intermediate) is an active-site residue. Positions 418–506 (GDGFGEEHDD…KKRAHRQHMK (89 aa)) are disordered. The span at 424-435 (EHDDSDDNDDEE) shows a compositional bias: acidic residues. Over residues 454 to 490 (EKERKIAMHTRNREETAEERKERKAAVKEEKREQRKE) the composition is skewed to basic and acidic residues. A compositionally biased stretch (basic residues) spans 491 to 506 (KIPKHLKKRAHRQHMK).

Belongs to the protein kinase superfamily. RIO-type Ser/Thr kinase family. Requires Mg(2+) as cofactor. In terms of tissue distribution, expressed in vulva and uterine cells, uterine seam cells (utse), spermatheca and in the nervous system including chemosensory neurons in the head, nerve ring neurons (RID/RIF), inhibitory motor neurons (DA/DD/VA/VD), mechanosensory neurons (ALML/PLML) and tail sensory neurons (DVA//PDA). Also expressed in intestine and pharynx (procorpus) and rectal valve and gland.

It localises to the cytoplasm. The catalysed reaction is L-seryl-[protein] + ATP = O-phospho-L-seryl-[protein] + ADP + H(+). The enzyme catalyses L-threonyl-[protein] + ATP = O-phospho-L-threonyl-[protein] + ADP + H(+). Its function is as follows. Involved in the final steps of cytoplasmic maturation of the 40S ribosomal subunit. Despite the protein kinase domain is proposed to act predominantly as an ATPase. The catalytic activity regulates its dynamic association with the 40S subunit. Plays a role in oogenesis by regulating germ cell proliferation, progression through diplotene and diakinesis stages and oocyte maturation. Regulates germline development probably by regulating the phosphorylation of mpk-1. Involved in larval development. This chain is Serine/threonine-protein kinase RIO1, found in Caenorhabditis elegans.